A 92-amino-acid chain; its full sequence is Small ribosomal subunit protein uS19c (92 aa).

The protein belongs to the universal ribosomal protein uS19 family.

Its subcellular location is the plastid. The protein resides in the chloroplast. In terms of biological role, protein S19 forms a complex with S13 that binds strongly to the 16S ribosomal RNA. In Chaetosphaeridium globosum (Charophycean green alga), this protein is Small ribosomal subunit protein uS19c.